The sequence spans 447 residues: Na(+)/H(+) antiporter NhaA 2 (447 aa).

11 helical membrane-spanning segments follow: residues 30-50 (FIHI…LAVL), 81-101 (LHKW…ALEL), 117-137 (LLSI…YLLL), 146-166 (GWGT…ALLG), 175-195 (IFML…VAIG), 199-219 (AVDW…RAMA), 220-240 (FLGV…WLVI), 315-335 (LLHP…NAGV), 350-370 (VFVG…WIAV), 383-403 (WGMV…ALFI), and 415-435 (AAKL…FLCL).

Belongs to the NhaA Na(+)/H(+) (TC 2.A.33) antiporter family.

It is found in the cell inner membrane. The enzyme catalyses Na(+)(in) + 2 H(+)(out) = Na(+)(out) + 2 H(+)(in). Functionally, na(+)/H(+) antiporter that extrudes sodium in exchange for external protons. In Vibrio vulnificus (strain CMCP6), this protein is Na(+)/H(+) antiporter NhaA 2.